The chain runs to 120 residues: MSKDQILEAIKGMSVLELNDLVKAIEEEFGVTAAAPVAVVAGGGAEAAAEQTEFTVNLVSGGASKINVIKVVRELTGLGLKEAKDLVDNAPKTLKEGVSKDEAEALKAKLEEAGAQVEVK.

It belongs to the bacterial ribosomal protein bL12 family. Homodimer. Part of the ribosomal stalk of the 50S ribosomal subunit. Forms a multimeric L10(L12)X complex, where L10 forms an elongated spine to which 2 to 4 L12 dimers bind in a sequential fashion. Binds GTP-bound translation factors.

In terms of biological role, forms part of the ribosomal stalk which helps the ribosome interact with GTP-bound translation factors. Is thus essential for accurate translation. The sequence is that of Large ribosomal subunit protein bL12 from Brevibacillus brevis (strain 47 / JCM 6285 / NBRC 100599).